A 286-amino-acid chain; its full sequence is Fructose-bisphosphate aldolase (286 aa).

A D-glyceraldehyde 3-phosphate-binding site is contributed by Ser-50. Asp-85 functions as the Proton donor in the catalytic mechanism. Zn(2+) is bound by residues His-86, Asp-107, Glu-137, and His-181. A dihydroxyacetone phosphate-binding site is contributed by Gly-182. His-209 lines the Zn(2+) pocket. Dihydroxyacetone phosphate contacts are provided by residues 210–212 (GGT) and 231–234 (NVNT).

It belongs to the class II fructose-bisphosphate aldolase family. The cofactor is Zn(2+).

The catalysed reaction is beta-D-fructose 1,6-bisphosphate = D-glyceraldehyde 3-phosphate + dihydroxyacetone phosphate. It functions in the pathway carbohydrate degradation; glycolysis; D-glyceraldehyde 3-phosphate and glycerone phosphate from D-glucose: step 4/4. Its function is as follows. Catalyzes the aldol condensation of dihydroxyacetone phosphate (DHAP or glycerone-phosphate) with glyceraldehyde 3-phosphate (G3P) to form fructose 1,6-bisphosphate (FBP) in gluconeogenesis and the reverse reaction in glycolysis. The protein is Fructose-bisphosphate aldolase (fba) of Staphylococcus epidermidis (strain ATCC 35984 / DSM 28319 / BCRC 17069 / CCUG 31568 / BM 3577 / RP62A).